We begin with the raw amino-acid sequence, 156 residues long: Putative pre-16S rRNA nuclease (156 aa).

It belongs to the YqgF nuclease family.

The protein localises to the cytoplasm. Its function is as follows. Could be a nuclease involved in processing of the 5'-end of pre-16S rRNA. The sequence is that of Putative pre-16S rRNA nuclease from Streptomyces avermitilis (strain ATCC 31267 / DSM 46492 / JCM 5070 / NBRC 14893 / NCIMB 12804 / NRRL 8165 / MA-4680).